Here is a 752-residue protein sequence, read N- to C-terminus: Catalase-peroxidase (752 aa).

The interval 1-20 (MENELVSKVKAPVPGNQTNT) is disordered. A cross-link (tryptophyl-tyrosyl-methioninium (Trp-Tyr) (with M-260)) is located at residues 111–234 (WHSAGTYRIG…LGAVQMGLIY (124 aa)). Histidine 112 acts as the Proton acceptor in catalysis. Residues 234–260 (YVNPEGPNGKPDPAAAAVDIRETFARM) constitute a cross-link (tryptophyl-tyrosyl-methioninium (Tyr-Met) (with W-111)). Histidine 275 contacts heme b.

This sequence belongs to the peroxidase family. Peroxidase/catalase subfamily. As to quaternary structure, homodimer or homotetramer. It depends on heme b as a cofactor. Formation of the three residue Trp-Tyr-Met cross-link is important for the catalase, but not the peroxidase activity of the enzyme.

The catalysed reaction is H2O2 + AH2 = A + 2 H2O. It carries out the reaction 2 H2O2 = O2 + 2 H2O. Functionally, bifunctional enzyme with both catalase and broad-spectrum peroxidase activity. The chain is Catalase-peroxidase from Koribacter versatilis (strain Ellin345).